The primary structure comprises 736 residues: Phosphoribosylformylglycinamidine synthase subunit PurL (736 aa).

His48 is a catalytic residue. ATP is bound by residues Tyr51 and Lys90. Mg(2+) is bound at residue Glu92. Substrate is bound by residues 93 to 96 (SHNH) and Arg115. The active-site Proton acceptor is the His94. Asp116 contributes to the Mg(2+) binding site. Gln239 is a substrate binding site. Asp267 serves as a coordination point for Mg(2+). Position 311-313 (311-313 (ESQ)) interacts with substrate. 2 residues coordinate ATP: Asp492 and Gly529. Asn530 contributes to the Mg(2+) binding site. Ser532 provides a ligand contact to substrate.

It belongs to the FGAMS family. Monomer. Part of the FGAM synthase complex composed of 1 PurL, 1 PurQ and 2 PurS subunits.

The protein resides in the cytoplasm. It catalyses the reaction N(2)-formyl-N(1)-(5-phospho-beta-D-ribosyl)glycinamide + L-glutamine + ATP + H2O = 2-formamido-N(1)-(5-O-phospho-beta-D-ribosyl)acetamidine + L-glutamate + ADP + phosphate + H(+). Its pathway is purine metabolism; IMP biosynthesis via de novo pathway; 5-amino-1-(5-phospho-D-ribosyl)imidazole from N(2)-formyl-N(1)-(5-phospho-D-ribosyl)glycinamide: step 1/2. Functionally, part of the phosphoribosylformylglycinamidine synthase complex involved in the purines biosynthetic pathway. Catalyzes the ATP-dependent conversion of formylglycinamide ribonucleotide (FGAR) and glutamine to yield formylglycinamidine ribonucleotide (FGAM) and glutamate. The FGAM synthase complex is composed of three subunits. PurQ produces an ammonia molecule by converting glutamine to glutamate. PurL transfers the ammonia molecule to FGAR to form FGAM in an ATP-dependent manner. PurS interacts with PurQ and PurL and is thought to assist in the transfer of the ammonia molecule from PurQ to PurL. This chain is Phosphoribosylformylglycinamidine synthase subunit PurL, found in Beijerinckia indica subsp. indica (strain ATCC 9039 / DSM 1715 / NCIMB 8712).